Here is a 260-residue protein sequence, read N- to C-terminus: Ubiquinone/menaquinone biosynthesis C-methyltransferase UbiE (260 aa).

S-adenosyl-L-methionine contacts are provided by residues Thr83, Asp104, and 132-133; that span reads NA.

Belongs to the class I-like SAM-binding methyltransferase superfamily. MenG/UbiE family.

The enzyme catalyses a 2-demethylmenaquinol + S-adenosyl-L-methionine = a menaquinol + S-adenosyl-L-homocysteine + H(+). It catalyses the reaction a 2-methoxy-6-(all-trans-polyprenyl)benzene-1,4-diol + S-adenosyl-L-methionine = a 5-methoxy-2-methyl-3-(all-trans-polyprenyl)benzene-1,4-diol + S-adenosyl-L-homocysteine + H(+). It participates in quinol/quinone metabolism; menaquinone biosynthesis; menaquinol from 1,4-dihydroxy-2-naphthoate: step 2/2. The protein operates within cofactor biosynthesis; ubiquinone biosynthesis. Functionally, methyltransferase required for the conversion of demethylmenaquinol (DMKH2) to menaquinol (MKH2) and the conversion of 2-polyprenyl-6-methoxy-1,4-benzoquinol (DDMQH2) to 2-polyprenyl-3-methyl-6-methoxy-1,4-benzoquinol (DMQH2). This chain is Ubiquinone/menaquinone biosynthesis C-methyltransferase UbiE, found in Bartonella bacilliformis (strain ATCC 35685 / KC583 / Herrer 020/F12,63).